The following is a 105-amino-acid chain: uncharacterized protein (105 aa).

Positions 1 to 27 (MQSPAMKRIKSSSHSRWDGSGSVNEMP) are disordered.

The protein localises to the mitochondrion. This is an uncharacterized protein from Arabidopsis thaliana (Mouse-ear cress).